The chain runs to 194 residues: Peptidyl-tRNA hydrolase (194 aa).

Residue Y16 participates in tRNA binding. H21 functions as the Proton acceptor in the catalytic mechanism. TRNA is bound by residues F67, N69, and N115.

It belongs to the PTH family. As to quaternary structure, monomer.

Its subcellular location is the cytoplasm. The enzyme catalyses an N-acyl-L-alpha-aminoacyl-tRNA + H2O = an N-acyl-L-amino acid + a tRNA + H(+). In terms of biological role, hydrolyzes ribosome-free peptidyl-tRNAs (with 1 or more amino acids incorporated), which drop off the ribosome during protein synthesis, or as a result of ribosome stalling. Its function is as follows. Catalyzes the release of premature peptidyl moieties from peptidyl-tRNA molecules trapped in stalled 50S ribosomal subunits, and thus maintains levels of free tRNAs and 50S ribosomes. This chain is Peptidyl-tRNA hydrolase, found in Shigella boydii serotype 18 (strain CDC 3083-94 / BS512).